A 961-amino-acid chain; its full sequence is Probable inorganic carbon transporter subunit DabA (961 aa).

4 residues coordinate Zn(2+): Cys406, Asp408, His653, and Cys668.

This sequence belongs to the inorganic carbon transporter (TC 9.A.2) DabA family. As to quaternary structure, forms a complex with DabB. The cofactor is Zn(2+).

It is found in the cell inner membrane. Functionally, part of an energy-coupled inorganic carbon pump. The polypeptide is Probable inorganic carbon transporter subunit DabA (Hydrogenobaculum sp. (strain Y04AAS1)).